The primary structure comprises 752 residues: Ribosomal RNA large subunit methyltransferase K/L (752 aa).

One can recognise a THUMP domain in the interval 53-164; the sequence is QMYKICLWTR…RDELHISIDL (112 aa).

Belongs to the methyltransferase superfamily. RlmKL family.

The protein resides in the cytoplasm. The catalysed reaction is guanosine(2445) in 23S rRNA + S-adenosyl-L-methionine = N(2)-methylguanosine(2445) in 23S rRNA + S-adenosyl-L-homocysteine + H(+). The enzyme catalyses guanosine(2069) in 23S rRNA + S-adenosyl-L-methionine = N(2)-methylguanosine(2069) in 23S rRNA + S-adenosyl-L-homocysteine + H(+). Specifically methylates the guanine in position 2445 (m2G2445) and the guanine in position 2069 (m7G2069) of 23S rRNA. The polypeptide is Ribosomal RNA large subunit methyltransferase K/L (Saccharophagus degradans (strain 2-40 / ATCC 43961 / DSM 17024)).